Reading from the N-terminus, the 100-residue chain is NADH-quinone oxidoreductase subunit K (100 aa).

3 helical membrane passes run 4-24, 28-48, and 60-80; these read LQHG…GLVI, LLFM…AFVV, and IMYI…LALL.

The protein belongs to the complex I subunit 4L family. NDH-1 is composed of 13 different subunits. Subunits NuoA, H, J, K, L, M, N constitute the membrane sector of the complex.

Its subcellular location is the cell inner membrane. It carries out the reaction a quinone + NADH + 5 H(+)(in) = a quinol + NAD(+) + 4 H(+)(out). NDH-1 shuttles electrons from NADH, via FMN and iron-sulfur (Fe-S) centers, to quinones in the respiratory chain. The immediate electron acceptor for the enzyme in this species is believed to be ubiquinone. Couples the redox reaction to proton translocation (for every two electrons transferred, four hydrogen ions are translocated across the cytoplasmic membrane), and thus conserves the redox energy in a proton gradient. The chain is NADH-quinone oxidoreductase subunit K from Cronobacter sakazakii (strain ATCC BAA-894) (Enterobacter sakazakii).